An 842-amino-acid chain; its full sequence is Protein translocase subunit SecA (842 aa).

ATP-binding positions include Q85, 103-107 (GEGKT), and D493. Zn(2+)-binding residues include C825, C827, C836, and H837.

The protein belongs to the SecA family. Monomer and homodimer. Part of the essential Sec protein translocation apparatus which comprises SecA, SecYEG and auxiliary proteins SecDF. Other proteins may also be involved. Requires Zn(2+) as cofactor.

The protein localises to the cell membrane. The protein resides in the cytoplasm. It carries out the reaction ATP + H2O + cellular proteinSide 1 = ADP + phosphate + cellular proteinSide 2.. Its function is as follows. Part of the Sec protein translocase complex. Interacts with the SecYEG preprotein conducting channel. Has a central role in coupling the hydrolysis of ATP to the transfer of proteins into and across the cell membrane, serving as an ATP-driven molecular motor driving the stepwise translocation of polypeptide chains across the membrane. In Streptococcus equi subsp. equi (strain 4047), this protein is Protein translocase subunit SecA.